A 131-amino-acid chain; its full sequence is Large ribosomal subunit protein eL32 (131 aa).

It belongs to the eukaryotic ribosomal protein eL32 family.

The sequence is that of Large ribosomal subunit protein eL32 (RPL32) from Eremothecium gossypii (strain ATCC 10895 / CBS 109.51 / FGSC 9923 / NRRL Y-1056) (Yeast).